Here is an 84-residue protein sequence, read N- to C-terminus: MDWRHKAVCRDEDPELFFPVGNSGPALAQIADAKLVCNRCPVTTECLSWALNTGQDSGVWGGMSEDERRALKRRNARTKARTGV.

Residues 8-70 (VCRDEDPELF…GGMSEDERRA (63 aa)) form the 4Fe-4S Wbl-type domain. Residues C9, C37, C40, and C46 each contribute to the [4Fe-4S] cluster site.

It belongs to the WhiB family. Homodimer. It depends on [4Fe-4S] cluster as a cofactor. In terms of processing, the Fe-S cluster can be nitrosylated by nitric oxide (NO). Post-translationally, upon Fe-S cluster removal intramolecular disulfide bonds are formed.

The protein localises to the cytoplasm. Acts as a transcriptional regulator. Probably redox-responsive. The apo- but not holo-form probably binds DNA. In Mycobacterium tuberculosis (strain CDC 1551 / Oshkosh), this protein is Transcriptional regulator WhiB1 (whiB1).